The following is a 146-amino-acid chain: Snaclec anticoagulant protein subunit B (146 aa).

The N-terminal stretch at 1–23 is a signal peptide; it reads MGRFIFVSFGLLVLFLSLSGTAA. The 123-residue stretch at 24–146 folds into the C-type lectin domain; the sequence is DCPSDWSSYE…IANFVCEFQA (123 aa). 3 disulfide bridges follow: cysteine 25–cysteine 36, cysteine 53–cysteine 142, and cysteine 119–cysteine 134. Ca(2+) contacts are provided by serine 64, glutamine 66, and glutamate 70. Glutamate 143 is a Ca(2+) binding site.

It belongs to the snaclec family. Heterodimer with subunit A of agkisacutacin or AaACP; disulfide-linked. As to expression, expressed by the venom gland.

The protein resides in the secreted. Anticoagulant protein which binds to the gamma-carboxyglutamic acid-domain regions of factors IX and factor X in the presence of calcium with a 1 to 1 stoichiometry. Also inhibits platelet aggregation by binding to platelet glycoprotein Ibalpha (GP1BA) and functioning as a blocker of vWF. Is devoid of hemorrhagic and lethal activities. Possesses antithrombotic and thrombolytic activities. Also hydrolyzes the Aalpha-chain of fibrinogen. Does not affect the Bbeta-chain and the gamma chain. The chain is Snaclec anticoagulant protein subunit B from Deinagkistrodon acutus (Hundred-pace snake).